An 85-amino-acid chain; its full sequence is Large ribosomal subunit protein bL27 (85 aa).

The disordered stretch occupies residues 1 to 23 (MAHKKGQGSTQNNRDSAGRRLGV).

Belongs to the bacterial ribosomal protein bL27 family.

In Aliarcobacter butzleri (strain RM4018) (Arcobacter butzleri), this protein is Large ribosomal subunit protein bL27.